The primary structure comprises 762 residues: Probable inorganic carbon transporter subunit DabA (762 aa).

Residues Cys-279, Asp-281, His-461, and Cys-476 each contribute to the Zn(2+) site.

Belongs to the inorganic carbon transporter (TC 9.A.2) DabA family. Forms a complex with DabB. Zn(2+) serves as cofactor.

Its subcellular location is the cell inner membrane. Part of an energy-coupled inorganic carbon pump. The protein is Probable inorganic carbon transporter subunit DabA of Legionella pneumophila (strain Corby).